A 349-amino-acid polypeptide reads, in one-letter code: Succinylglutamate desuccinylase (349 aa).

3 residues coordinate Zn(2+): H70, E73, and H166. E229 is a catalytic residue.

The protein belongs to the AspA/AstE family. Succinylglutamate desuccinylase subfamily. The cofactor is Zn(2+).

The enzyme catalyses N-succinyl-L-glutamate + H2O = L-glutamate + succinate. It functions in the pathway amino-acid degradation; L-arginine degradation via AST pathway; L-glutamate and succinate from L-arginine: step 5/5. Functionally, transforms N(2)-succinylglutamate into succinate and glutamate. The protein is Succinylglutamate desuccinylase of Burkholderia thailandensis (strain ATCC 700388 / DSM 13276 / CCUG 48851 / CIP 106301 / E264).